Here is a 291-residue protein sequence, read N- to C-terminus: uncharacterized protein (291 aa).

An HTH araC/xylS-type domain is found at 191–289 (KQMLNWIHLH…NMTPLSYKKM (99 aa)). 2 DNA-binding regions (H-T-H motif) span residues 208 to 229 (EDIA…KRML) and 256 to 279 (VTEV…QQAM).

This is an uncharacterized protein from Bacillus subtilis (strain 168).